Reading from the N-terminus, the 90-residue chain is Small ribosomal subunit protein uS15c (90 aa).

Component of the chloroplast small ribosomal subunit (SSU). Mature 70S chloroplast ribosomes of higher plants consist of a small (30S) and a large (50S) subunit. The 30S small subunit contains 1 molecule of ribosomal RNA (16S rRNA) and 24 different proteins. The 50S large subunit contains 3 rRNA molecules (23S, 5S and 4.5S rRNA) and 33 different proteins.

The protein resides in the plastid. Its subcellular location is the chloroplast. Functionally, component of the chloroplast ribosome (chloro-ribosome), a dedicated translation machinery responsible for the synthesis of chloroplast genome-encoded proteins, including proteins of the transcription and translation machinery and components of the photosynthetic apparatus. The protein is Small ribosomal subunit protein uS15c (rps15) of Spinacia oleracea (Spinach).